Here is a 36-residue protein sequence, read N- to C-terminus: Photosystem I reaction center subunit VIII (36 aa).

The helical transmembrane segment at 8 to 28 (AILVPIVGLVFPALSMALFFI) threads the bilayer.

The protein belongs to the PsaI family.

It localises to the plastid. The protein localises to the chloroplast thylakoid membrane. Functionally, may help in the organization of the PsaL subunit. This chain is Photosystem I reaction center subunit VIII, found in Phaeodactylum tricornutum (strain CCAP 1055/1).